The chain runs to 386 residues: Heat-inducible transcription repressor HrcA (386 aa).

This sequence belongs to the HrcA family.

Functionally, negative regulator of class I heat shock genes (grpE-dnaK-dnaJ and groELS operons). Prevents heat-shock induction of these operons. In Chlamydia caviae (strain ATCC VR-813 / DSM 19441 / 03DC25 / GPIC) (Chlamydophila caviae), this protein is Heat-inducible transcription repressor HrcA.